Consider the following 276-residue polypeptide: 2,3,4,5-tetrahydropyridine-2,6-dicarboxylate N-succinyltransferase (276 aa).

Substrate-binding residues include R104 and D141.

The protein belongs to the transferase hexapeptide repeat family. In terms of assembly, homotrimer.

It localises to the cytoplasm. It carries out the reaction (S)-2,3,4,5-tetrahydrodipicolinate + succinyl-CoA + H2O = (S)-2-succinylamino-6-oxoheptanedioate + CoA. The protein operates within amino-acid biosynthesis; L-lysine biosynthesis via DAP pathway; LL-2,6-diaminopimelate from (S)-tetrahydrodipicolinate (succinylase route): step 1/3. The sequence is that of 2,3,4,5-tetrahydropyridine-2,6-dicarboxylate N-succinyltransferase from Pseudoalteromonas translucida (strain TAC 125).